A 309-amino-acid polypeptide reads, in one-letter code: Carbonic anhydrase 4 (309 aa).

The N-terminal stretch at 1 to 17 (MQLLLALLALAYVAPST) is a signal peptide. The 263-residue stretch at 20 to 282 (SHWCYEIQAK…LGNRQVFRSH (263 aa)) folds into the Alpha-carbonic anhydrase domain. Disulfide bonds link Cys-23–Cys-35 and Cys-45–Cys-226. His-87 acts as the Proton donor/acceptor in catalysis. Zn(2+)-binding residues include His-114, His-116, and His-139. Asn-193 carries an N-linked (GlcNAc...) asparagine glycan. 222 to 223 (TT) provides a ligand contact to substrate. Ser-281 is lipidated: GPI-anchor amidated serine. The propeptide at 282 to 309 (HASGRLLSLPLPTLLVPTLTCLVASFLH) is removed in mature form.

Belongs to the alpha-carbonic anhydrase family. As to quaternary structure, interacts with SLC4A4. Requires Zn(2+) as cofactor. The N-terminus is blocked. Post-translationally, glycosylated. In terms of tissue distribution, present in kidney and lung. Also particularly abundant in brain, muscle, heart and liver. Not detected in skin or spleen.

The protein resides in the cell membrane. The catalysed reaction is hydrogencarbonate + H(+) = CO2 + H2O. Its activity is regulated as follows. Inhibited by acetazolamide. Catalyzes the reversible hydration of carbon dioxide into bicarbonate and protons and thus is essential to maintaining intracellular and extracellular pH. May stimulate the sodium/bicarbonate transporter activity of SLC4A4 that acts in pH homeostasis. It is essential for acid overload removal from the retina and retina epithelium, and acid release in the choriocapillaris in the choroid. The protein is Carbonic anhydrase 4 (Ca4) of Rattus norvegicus (Rat).